Reading from the N-terminus, the 289-residue chain is Protease HtpX homolog (289 aa).

The next 2 membrane-spanning stretches (helical) occupy residues 8–28 (LALL…VIGG) and 29–49 (SSGL…SWYQ). Zn(2+) is bound at residue histidine 132. Glutamate 133 is a catalytic residue. Residue histidine 136 participates in Zn(2+) binding. 2 helical membrane passes run 151–171 (VAGA…FGGI) and 183–203 (LGVL…QLAI). Position 208 (glutamate 208) interacts with Zn(2+).

The protein belongs to the peptidase M48B family. Zn(2+) serves as cofactor.

It is found in the cell inner membrane. This chain is Protease HtpX homolog, found in Trichormus variabilis (strain ATCC 29413 / PCC 7937) (Anabaena variabilis).